The sequence spans 237 residues: Cobalt-precorrin-2 C(20)-methyltransferase (237 aa).

The protein belongs to the precorrin methyltransferase family. Homodimer.

The enzyme catalyses Co-precorrin-2 + S-adenosyl-L-methionine = Co-precorrin-3 + S-adenosyl-L-homocysteine + H(+). The protein operates within cofactor biosynthesis; adenosylcobalamin biosynthesis; cob(II)yrinate a,c-diamide from sirohydrochlorin (anaerobic route): step 2/10. Functionally, methylates cobalt-precorrin-2 at the C-20 position to produce cobalt-precorrin-3A in the anaerobic cobalamin biosynthesis pathway. This is Cobalt-precorrin-2 C(20)-methyltransferase (cbiL) from Salmonella typhimurium (strain LT2 / SGSC1412 / ATCC 700720).